Consider the following 540-residue polypeptide: H(+)/hexose cotransporter 2 (540 aa).

Over 1-29 (MAGGGPVASTTTNRASQYGYARGGLNWYI) the chain is Cytoplasmic. A helical membrane pass occupies residues 30–50 (FIVALTAGSGGLLFGYDIGVT). The Extracellular segment spans residues 51-90 (GGVTSMPEFLQKFFPSIYDRTQQPSDSKDPYCTYDDQKLQ). The helical transmembrane segment at 91 to 111 (LFTSSFFLAGMFVSFFAGSVV) threads the bilayer. Residues 112-124 (RRWGRKPTMLIAS) are Cytoplasmic-facing. The helical transmembrane segment at 125 to 135 (VLFLAGAGLNA) threads the bilayer. The Extracellular portion of the chain corresponds to 136-147 (GAQDLAMLVIGR). Residues 148–168 (VLLGFGVGGGNNAVPLYLSEC) form a helical membrane-spanning segment. Over 169-176 (APPKYRGG) the chain is Cytoplasmic. The helical transmembrane segment at 177–197 (LNMMFQLAVTIGIIVAQLVNY) threads the bilayer. Topologically, residues 198 to 207 (GTQTMNNGWR) are extracellular. A helical transmembrane segment spans residues 208 to 228 (LSLGLAGVPAIILLIGSLLLP). Residues 229–296 (ETPNSLIERG…YSPMLIVTSL (68 aa)) lie on the Cytoplasmic side of the membrane. A helical membrane pass occupies residues 297–317 (IAMLQQLTGINAIMFYVPVLF). The Extracellular segment spans residues 318 to 326 (SSFGTARHA). Residues 327-337 (ALLNTVIIGAV) traverse the membrane as a helical segment. Over 338 to 355 (NVAATFVSIFSVDKFGRR) the chain is Cytoplasmic. Residues 356–376 (GLFLEGGIQMFIGQVVTAAVL) form a helical membrane-spanning segment. The Extracellular segment spans residues 377-396 (GVELNKYGTNLPSSTAAGVL). Residues 397 to 417 (VVICVYVAAFAWSWGPLGWLV) form a helical membrane-spanning segment. Residues 418–435 (PSEIQTLETRGAGMSMAV) are Cytoplasmic-facing. A helical transmembrane segment spans residues 436–456 (IVNFLFSFVIGQAFLSMMCAM). The Extracellular portion of the chain corresponds to 457 to 458 (RW). The chain crosses the membrane as a helical span at residues 459–479 (GVFLFFAGWVVIMTFFVYFCL). At 480 to 540 (PETKGVPVET…SEDGKPASDQ (61 aa)) the chain is on the cytoplasmic side.

Belongs to the major facilitator superfamily. Sugar transporter (TC 2.A.1.1) family.

Its subcellular location is the membrane. Functionally, active uptake of galactose. The protein is H(+)/hexose cotransporter 2 (HUP2) of Parachlorella kessleri (Green alga).